An 80-amino-acid polypeptide reads, in one-letter code: Large ribosomal subunit protein uL24 (80 aa).

Residues 53 to 80 (HMKPTQSHPQGSIIEREFPIHASNVKKS) form a disordered region.

The protein belongs to the universal ribosomal protein uL24 family. As to quaternary structure, part of the 50S ribosomal subunit.

One of two assembly initiator proteins, it binds directly to the 5'-end of the 23S rRNA, where it nucleates assembly of the 50S subunit. In terms of biological role, one of the proteins that surrounds the polypeptide exit tunnel on the outside of the subunit. The protein is Large ribosomal subunit protein uL24 of Chlorobium limicola (strain DSM 245 / NBRC 103803 / 6330).